The following is a 491-amino-acid chain: Regulatory protein NPR5 (491 aa).

In terms of domain architecture, BTB spans 26–116 (SDVTFSVEGR…LYSGQVSIVP (91 aa)). A C2HC NPR-type zinc finger spans residues 122–136 (RPNCGERGCWHTHCS). 4 residues coordinate Zn(2+): Cys125, Cys130, His132, and Cys135. ANK repeat units lie at residues 254–283 (QKIR…LNLD), 284–313 (ESLA…DVNY), 318–347 (AGKT…DPNV), and 351–385 (GGIT…KLRL). Residues 400 to 491 (EEGNNSNNQN…MYHHHHQHHF (92 aa)) are disordered. Low complexity predominate over residues 403–413 (NNSNNQNNDNN). A compositionally biased stretch (basic and acidic residues) spans 457–470 (DQGDDHNSQREGMS).

It belongs to the plant 'ANKYRIN-BTB/POZ' family. 'NOOT-BOP-COCH-like' (NBCL) subfamily. In terms of assembly, homodimer or heterodimer with BOP1. Interacts with PAN. In terms of tissue distribution, highly expressed in young floral meristem. Predominantly expressed in the boundary between floral meristem (FM) and sepal primordia.

It is found in the cytoplasm. The protein resides in the nucleus. The protein operates within protein modification; protein ubiquitination. Functionally, may act as a substrate-specific adapter of an E3 ubiquitin-protein ligase complex (CUL3-RBX1-BTB) which mediates the ubiquitination and subsequent proteasomal degradation of target proteins. Acts redundantly with BOP2. BOP1/2 promote leaf and floral meristem fate and determinacy in a pathway targeting AP1 and AGL24. BOP1/2 act as transcriptional co-regulators through direct interaction with TGA factors, including PAN, a direct regulator of AP1. Controls lateral organ fate through positive regulation of adaxial-abaxial polarity genes ATHB-14/PHB, YAB1/FIL and YAB3, and through positive regulation of LOB domain-containing genes LOB, LBD6/AS2 and LBD36. Promotes and maintains a developmentally determinate state in leaf cells through the negative regulation of JAG, JGL and class I KNOX genes. Is also involved in nectary development, formation of normal abscission zones (AZs) and suppression of bract formation, probably by regulating the cell wall disorganization. In Arabidopsis thaliana (Mouse-ear cress), this protein is Regulatory protein NPR5.